Consider the following 78-residue polypeptide: Structural DNA-binding protein p10 (78 aa).

The span at 1–25 (MPTKAGTKSTANKKTTKGSSKSGSA) shows a compositional bias: low complexity. The disordered stretch occupies residues 1–41 (MPTKAGTKSTANKKTTKGSSKSGSARGHTGKTHAPPSMHSG).

The protein belongs to the asfivirus P10 family.

It is found in the virion. May play a role in genome packaging through direct interaction with viral DNA. Binds to ssDNA and dsDNA with the same apparent affinity in vitro. This chain is Structural DNA-binding protein p10, found in African swine fever virus (isolate Warthog/Namibia/Wart80/1980) (ASFV).